A 287-amino-acid chain; its full sequence is 4-hydroxybenzoate octaprenyltransferase (287 aa).

The next 6 helical transmembrane spans lie at 41–61, 89–109, 133–153, 158–178, 202–224, and 266–286; these read WPLL…GCAM, WEAV…ILPL, FFAI…PMAF, DTVP…SVAY, FGRF…YVWI, and HNNW…LLAG.

Belongs to the UbiA prenyltransferase family. Mg(2+) serves as cofactor.

The protein localises to the cell inner membrane. It catalyses the reaction all-trans-octaprenyl diphosphate + 4-hydroxybenzoate = 4-hydroxy-3-(all-trans-octaprenyl)benzoate + diphosphate. It functions in the pathway cofactor biosynthesis; ubiquinone biosynthesis. Functionally, catalyzes the prenylation of para-hydroxybenzoate (PHB) with an all-trans polyprenyl group. Mediates the second step in the final reaction sequence of ubiquinone-8 (UQ-8) biosynthesis, which is the condensation of the polyisoprenoid side chain with PHB, generating the first membrane-bound Q intermediate 3-octaprenyl-4-hydroxybenzoate. The protein is 4-hydroxybenzoate octaprenyltransferase of Burkholderia orbicola (strain MC0-3).